A 238-amino-acid polypeptide reads, in one-letter code: Uridylate kinase (238 aa).

10–13 is an ATP binding site; the sequence is KFSG. The tract at residues 18-23 is involved in allosteric activation by GTP; the sequence is GGNGFG. UMP is bound at residue G52. 2 residues coordinate ATP: G53 and R57. UMP is bound by residues D73 and 134–141; that span reads TGNPFFTT. Residues T161, Y167, and D170 each coordinate ATP.

Belongs to the UMP kinase family. Homohexamer.

It is found in the cytoplasm. It catalyses the reaction UMP + ATP = UDP + ADP. Its pathway is pyrimidine metabolism; CTP biosynthesis via de novo pathway; UDP from UMP (UMPK route): step 1/1. Allosterically activated by GTP. Inhibited by UTP. In terms of biological role, catalyzes the reversible phosphorylation of UMP to UDP. The sequence is that of Uridylate kinase from Campylobacter fetus subsp. fetus (strain 82-40).